The following is a 124-amino-acid chain: Modulator protein MzrA (124 aa).

Residues 1–7 are Cytoplasmic-facing; the sequence is MINRRMK. The chain crosses the membrane as a helical span at residues 8 to 28; it reads TGFVFHLLLLLLPLVVLVTSS. Topologically, residues 29–124 are periplasmic; the sequence is RRTADDVTLH…KLSQQPFKLG (96 aa).

It belongs to the MzrA family. As to quaternary structure, interacts with EnvZ.

The protein localises to the cell inner membrane. In terms of biological role, modulates the activity of the EnvZ/OmpR two-component regulatory system, probably by directly modulating EnvZ enzymatic activity and increasing stability of phosphorylated OmpR. This is Modulator protein MzrA from Musicola paradisiaca (strain Ech703) (Dickeya paradisiaca).